Here is a 175-residue protein sequence, read N- to C-terminus: Large ribosomal subunit protein uL10 (175 aa).

The protein belongs to the universal ribosomal protein uL10 family. Part of the ribosomal stalk of the 50S ribosomal subunit. The N-terminus interacts with L11 and the large rRNA to form the base of the stalk. The C-terminus forms an elongated spine to which L12 dimers bind in a sequential fashion forming a multimeric L10(L12)X complex.

Forms part of the ribosomal stalk, playing a central role in the interaction of the ribosome with GTP-bound translation factors. This chain is Large ribosomal subunit protein uL10, found in Methylococcus capsulatus (strain ATCC 33009 / NCIMB 11132 / Bath).